The following is a 316-amino-acid chain: Dehydrogenase/reductase SDR family protein 7-like (316 aa).

The Cytoplasmic segment spans residues 1–18; that stretch reads MFFYKIIYFIGFPYIVLR. Residues 19 to 39 traverse the membrane as a helical; Signal-anchor for type II membrane protein segment; it reads LIVSIILPIASLYFIYCNFIA. The Peroxisomal portion of the chain corresponds to 40 to 316; sequence PKLREKPESS…HKFASSSVKK (277 aa). 56 to 80 lines the NAD(+) pocket; it reads IITGASSGIGAELAKKYARLGCKVT. Residue S194 participates in substrate binding. Residue Y207 is the Proton acceptor of the active site.

Belongs to the short-chain dehydrogenases/reductases (SDR) family.

It is found in the peroxisome membrane. Its function is as follows. Putative oxidoreductase. The protein is Dehydrogenase/reductase SDR family protein 7-like of Dictyostelium discoideum (Social amoeba).